A 766-amino-acid chain; its full sequence is LPS-assembly protein LptD (766 aa).

A signal peptide spans 1–18 (MNIRYLLLLSLMPHLVWA).

Belongs to the LptD family. As to quaternary structure, component of the lipopolysaccharide transport and assembly complex. Interacts with LptE and LptA.

The protein localises to the cell outer membrane. Its function is as follows. Together with LptE, is involved in the assembly of lipopolysaccharide (LPS) at the surface of the outer membrane. This chain is LPS-assembly protein LptD, found in Shewanella denitrificans (strain OS217 / ATCC BAA-1090 / DSM 15013).